The following is a 150-amino-acid chain: Aspartate 1-decarboxylase (150 aa).

The active-site Schiff-base intermediate with substrate; via pyruvic acid is the Ser-24. Ser-24 bears the Pyruvic acid (Ser) mark. Residue Thr-56 coordinates substrate. Tyr-57 (proton donor) is an active-site residue. Residue 72–74 coordinates substrate; it reads GAA.

Belongs to the PanD family. Heterooctamer of four alpha and four beta subunits. Pyruvate serves as cofactor. Is synthesized initially as an inactive proenzyme, which is activated by self-cleavage at a specific serine bond to produce a beta-subunit with a hydroxyl group at its C-terminus and an alpha-subunit with a pyruvoyl group at its N-terminus.

It localises to the cytoplasm. It catalyses the reaction L-aspartate + H(+) = beta-alanine + CO2. The protein operates within cofactor biosynthesis; (R)-pantothenate biosynthesis; beta-alanine from L-aspartate: step 1/1. In terms of biological role, catalyzes the pyruvoyl-dependent decarboxylation of aspartate to produce beta-alanine. The polypeptide is Aspartate 1-decarboxylase (Beijerinckia indica subsp. indica (strain ATCC 9039 / DSM 1715 / NCIMB 8712)).